Here is a 220-residue protein sequence, read N- to C-terminus: Large ribosomal subunit protein uL16z (220 aa).

Belongs to the universal ribosomal protein uL16 family. As to quaternary structure, component of the small ribosomal subunit. Mature ribosomes consist of a small (40S) and a large (60S) subunit. The 40S subunit contains about 33 different proteins and 1 molecule of RNA (18S). The 60S subunit contains about 49 different proteins and 3 molecules of RNA (25S, 5.8S and 5S). Interacts with NIK1. Interacts with LIMYB. In terms of processing, phosphorylated by NIK1 and NIK2 in vitro. As to expression, ubiquitous, with the highest expression in flowers. Expressed in seedlings, leaves, roots, stems and flowers. Expressed in young leaves, mostly in dividing cells and in the hydathodes, in the root tips and lateral root primordia, in pistils, anthers, and pollen grains, and in developing seeds.

The protein resides in the cytoplasm. The protein localises to the nucleus. Ribosomal protein involved in translational regulation. Contribute to general translation under UV-B stress. Involved in the NIK1-mediated defense response to geminivirus infection. Acts coordinately with LIMYB as a transcriptional repressor. This is Large ribosomal subunit protein uL16z from Arabidopsis thaliana (Mouse-ear cress).